The chain runs to 193 residues: Penicillin-binding protein activator LpoB (193 aa).

The N-terminal stretch at 1-16 (MKRYLSVALAALVLTG) is a signal peptide. Residue Cys17 is the site of N-palmitoyl cysteine attachment. A lipid anchor (S-diacylglycerol cysteine) is attached at Cys17. The interval 24 to 55 (EPTTPPVTIEPVTPPVPETPPPVDNVPPPPKM) is disordered. Pro residues predominate over residues 35–54 (VTPPVPETPPPVDNVPPPPK).

The protein belongs to the LpoB family. Interacts with PBP1b.

The protein localises to the cell outer membrane. Regulator of peptidoglycan synthesis that is essential for the function of penicillin-binding protein 1B (PBP1b). The protein is Penicillin-binding protein activator LpoB of Yersinia enterocolitica serotype O:8 / biotype 1B (strain NCTC 13174 / 8081).